Here is a 144-residue protein sequence, read N- to C-terminus: uncharacterized protein (144 aa).

2 N-linked (GlcNAc...) asparagine glycosylation sites follow: Asn-14 and Asn-15. The chain crosses the membrane as a helical span at residues 90-110 (FSWFIFGLFIACLLLCITLVL). The segment at 120–144 (NKATEVVPSSNIDDEEKQLSLSDMI) is disordered.

It is found in the membrane. This is an uncharacterized protein from Saccharomyces cerevisiae (strain ATCC 204508 / S288c) (Baker's yeast).